Reading from the N-terminus, the 143-residue chain is Hemoglobin subunit alpha (143 aa).

One can recognise a Globin domain in the interval 2–143; sequence SLTARDKSVV…LSAALADKYR (142 aa). His-60 is a binding site for O2. Heme b is bound at residue His-89.

This sequence belongs to the globin family. Heterotetramer of two alpha chains and two beta chains. In terms of tissue distribution, red blood cells.

In terms of biological role, involved in oxygen transport from gills to the various peripheral tissues. The protein is Hemoglobin subunit alpha (hba) of Salmo salar (Atlantic salmon).